A 128-amino-acid chain; its full sequence is Protein 2B* (128 aa).

Disordered regions lie at residues P1 to A27 and R92 to S128. Positions S18 to A27 are enriched in polar residues. Residues I111–S128 are compositionally biased toward basic and acidic residues.

It belongs to the encephalomyocarditis virus protein 2B* family.

The chain is Protein 2B* from Aotus trivirgatus (Three-striped night monkey).